A 227-amino-acid chain; its full sequence is GTP:AMP phosphotransferase AK3, mitochondrial (227 aa).

GTP is bound by residues Gly17, Gly19, Lys20, Gly21, and Thr22. N6-succinyllysine is present on Lys20. Lys29 is subject to N6-acetyllysine; alternate. N6-succinyllysine; alternate is present on Lys29. The residue at position 34 (Lys34) is an N6-acetyllysine. Position 37 is a phosphoserine (Ser37). Residues 37–66 are NMP; the sequence is SSGDLLRQNMLQGTEIAVLAKSFIDQGKLI. Residues Ser38 and Arg43 each contribute to the AMP site. Lys57 carries the post-translational modification N6-succinyllysine. 2 positions are modified to N6-acetyllysine; alternate: Lys64 and Lys80. Residues Lys64 and Lys80 each carry the N6-succinyllysine; alternate modification. An AMP-binding site is contributed by Lys64. 3 residues coordinate AMP: Gly91, Arg94, and Gln98. The LID stretch occupies residues 127-164; it reads ARWIHPASGRVYNIEFNPPKTVGIDDLTGEPLIQREDD. Residues Arg128, Tyr138, Asn139, Arg161, and Arg172 each contribute to the GTP site. Residues Lys174 and Lys189 each carry the N6-acetyllysine; alternate modification. Lys174 and Lys189 each carry N6-succinyllysine; alternate. Thr201 lines the GTP pocket. Lys203 carries the post-translational modification N6-acetyllysine.

Belongs to the adenylate kinase family. AK3 subfamily. As to quaternary structure, monomer.

It is found in the mitochondrion matrix. It catalyses the reaction a ribonucleoside 5'-triphosphate + AMP = a ribonucleoside 5'-diphosphate + ADP. It carries out the reaction GTP + AMP = GDP + ADP. The catalysed reaction is ITP + AMP = IDP + ADP. In terms of biological role, mitochondrial adenylate kinase with a specific GTP:AMP phosphotransferase activity. Could also use ITP as phosphate donor. Its physiological function is to recycle GTP into GDP which is necessary for the TCA cycle in the mitochondrial matrix. The polypeptide is GTP:AMP phosphotransferase AK3, mitochondrial (Rattus norvegicus (Rat)).